Reading from the N-terminus, the 621-residue chain is UvrABC system protein C (621 aa).

The GIY-YIG domain maps to 13–92 (EKPGVYLMKN…IKKYRPRYNI (80 aa)). The UVR domain occupies 204–239 (NEVINDLKIKMEKASSELKFEEAASFRDKLLAVEKI).

It belongs to the UvrC family. As to quaternary structure, interacts with UvrB in an incision complex.

The protein resides in the cytoplasm. Its function is as follows. The UvrABC repair system catalyzes the recognition and processing of DNA lesions. UvrC both incises the 5' and 3' sides of the lesion. The N-terminal half is responsible for the 3' incision and the C-terminal half is responsible for the 5' incision. This Clostridium novyi (strain NT) protein is UvrABC system protein C.